The chain runs to 376 residues: Mitogen-activated protein kinase 4 (376 aa).

Residues 43-329 (VPPLRPIGRG…VDEALCHPYL (287 aa)) form the Protein kinase domain. Residues 49 to 57 (IGRGAYGIV) and lysine 72 contribute to the ATP site. The active-site Proton acceptor is aspartate 169. Threonine 201 is subject to Phosphothreonine. Residues 201 to 203 (TEY) carry the TXY motif. Phosphotyrosine is present on tyrosine 203.

It belongs to the protein kinase superfamily. CMGC Ser/Thr protein kinase family. MAP kinase subfamily. In terms of assembly, interacts with MEKK1, MKK1, MKK2 and MKK6. May form a ternary complex composed of MEKK1 and MKK1/MKK2 and MPK4. Interacts with MKS1 and AP2C1. May form a ternary or larger complex with MKS1 and WRKY25 and/or WRKY33. Interacts with MAP65-1. No interactions with RACK1A, RACK1B or RACK1C. Interacts directly with ASR3 and mediates its phosphorylation. Binds to MEKK2. Interacts with PAT1. Binds to HT1. Dually phosphorylated on Thr-201 and Tyr-203, which activates the enzyme. Autophosphorylated on serine and tyrosine residues. Dephosphorylated by DSPTP1. Phosphorylated by MKK6 in vitro. As to expression, ubiquitous. Expressed in the veins and stomatal guard cells of leaf plates, petioles, stem, roots and flowers.

Its subcellular location is the cytoplasm. The protein localises to the nucleus. It localises to the cytoskeleton. It catalyses the reaction L-seryl-[protein] + ATP = O-phospho-L-seryl-[protein] + ADP + H(+). It carries out the reaction L-threonyl-[protein] + ATP = O-phospho-L-threonyl-[protein] + ADP + H(+). Activated by threonine and tyrosine phosphorylation. Activated by the MAP kinase kinases MKK1 and MKK2. Activated in response to touch, wounding, low temperature, low humidity, salt stress and the bacterial elicitors flagellin and harpin. Activated upon Pseudomonas syringae pv. tomato DC3000 infection. Repressed by the protein phosphatase 2C AP2C1. Repressed by DSPTP1-mediated dephosphorylation. Activated by the MAP kinase kinase MKK6 in vitro. Functionally, the ANPs-MKK6-MPK4 module is involved in the regulation of plant cytokinesis during meiosis and mitosis. Essential to promote the progression of cytokinesis and for cellularization (formation of the cell plate) during male-specific meiosis. Involved in cortical microtubules organization and stabilization by regulating the phosphorylation state of microtubule-associated proteins such as MAP65-1. Involved in root hair development process. Negative regulator of systemic acquired resistance (SAR) and salicylic acid- (SA) mediated defense response. Required for jasmonic acid- (JA) mediated defense gene expression. May regulate activity of transcription factor controlling pathogenesis-related (PR) gene expression. Seems to act independently of the SAR regulatory protein NPR1 (Nonexpresser of PR1). Phosphorylates MKS1 and transcription factors WRKY25 and WRKY33. The MEKK1, MKK1/MKK2 and MPK4 function in a signaling pathway that modulates the expression of genes responding to biotic and abiotic stresses and also plays an important role in pathogen defense by negatively regulating innate immunity. Phosphorylates MEKK2 upon treatment with flg22. Involved in stomatal movement regulation by repressing HT1 and HT1-mediated GHR1 phosphorylation. The chain is Mitogen-activated protein kinase 4 from Arabidopsis thaliana (Mouse-ear cress).